The primary structure comprises 234 residues: Thrombin-like enzyme ancrod (234 aa).

Residues 1-227 (VIGGDECNIN…YRDWVNNVIA (227 aa)) enclose the Peptidase S1 domain. 6 disulfide bridges follow: Cys7-Cys141, Cys28-Cys44, Cys78-Cys232, Cys120-Cys188, Cys152-Cys167, and Cys178-Cys203. Asn23 is a glycosylation site (N-linked (GlcNAc...) asparagine). The active-site Charge relay system is His43. A glycan (N-linked (GlcNAc...) asparagine) is linked at Asn79. Asp88 functions as the Charge relay system in the catalytic mechanism. 2 N-linked (GlcNAc...) asparagine glycosylation sites follow: Asn99 and Asn148. Catalysis depends on Ser182, which acts as the Charge relay system. Asn229 is a glycosylation site (N-linked (GlcNAc...) asparagine).

It belongs to the peptidase S1 family. Snake venom subfamily. Monomer. As to expression, expressed by the venom gland.

It is found in the secreted. It carries out the reaction Selective cleavage of Arg-|-Xaa bond in fibrinogen, to form fibrin, and release fibrinopeptide A. The specificity of further degradation of fibrinogen varies with species origin of the enzyme.. Thrombin-like snake venom serine protease that acts as an anticoagulant. It cleaves fibrinogen (FGA) to split off the A-fibrinopeptides (A, AY and AP), but not the B-fibrinopeptide. The resulting fibrin polymers are imperfectly formed and much smaller in size (1 to 2 um long) than the fibrin polymers produced by the action of thrombin. These ancrod-induced microthrombi are friable, unstable, urea-soluble and have significantly degraded alpha chains. They do not cross-link to form thrombi. They are markedly susceptible to digestion by plasmin and are rapidly removed from circulation by either reticuloendothelial phagocytosis or normal fibrinolysis, or both. Anticoagulation through the removal of fibrinogen from the blood is rapid, occurring within hours following its administration. It does not activate plasminogen and does not degrade preformed, fully cross-linked thrombin fibrin. It also reduces the level of plasminogen activator inhibitor (PAI) and may stimulate the release of tissue plasminogen activator (PLAT) from the endothelium. The profibrinolytic effect of these 2 actions appears to be limited to local microthrombus degradation. In Calloselasma rhodostoma (Malayan pit viper), this protein is Thrombin-like enzyme ancrod.